We begin with the raw amino-acid sequence, 418 residues long: MNIIDDLKWRGAINQQTDEAGLKELTENQSVSLYCGIDPTGDSMHIGHLIPFMILKRFQLAGHHPYVVVGGGTGAIGDPSGKNSERKLQTMDQVKHNQDGLSAQMYKLFGHDENFSIVNNYDWLSKISLLDFLRDYGKLFSVNTMLNKEVVASRLEVGISYTEFTYQILQSVDFLHLYRAEHVQLQIGGADQWGNITAGTDLIHRLEGNDAKAYGLTIPLLLKADGTKFGKTAGGAVWLNPERTSPYEFYQFWINQDDRDVVKYLKYFTFLSHEEIDRLAETVKTAPEKREAQRRLAEEVTEFVHGKQAVVEAENITKALFTGDVQSLTADEIEQGFKGVPSADVSAEKQNIVLWLVDATKFEPSRRQAREDIKNGAIRINGEKVTDVEAEIDPSAAFNGKFVIVRRGKKRYFLAHVK.

Y34 provides a ligand contact to L-tyrosine. Positions 39-48 (PTGDSMHIGH) match the 'HIGH' region motif. L-tyrosine is bound by residues Y166 and Q170. The short motif at 228-232 (KFGKT) is the 'KMSKS' region element. K231 lines the ATP pocket. Residues 350–418 (QNIVLWLVDA…KKRYFLAHVK (69 aa)) enclose the S4 RNA-binding domain.

Belongs to the class-I aminoacyl-tRNA synthetase family. TyrS type 1 subfamily. In terms of assembly, homodimer.

The protein localises to the cytoplasm. It catalyses the reaction tRNA(Tyr) + L-tyrosine + ATP = L-tyrosyl-tRNA(Tyr) + AMP + diphosphate + H(+). In terms of biological role, catalyzes the attachment of tyrosine to tRNA(Tyr) in a two-step reaction: tyrosine is first activated by ATP to form Tyr-AMP and then transferred to the acceptor end of tRNA(Tyr). This Lactiplantibacillus plantarum (strain ATCC BAA-793 / NCIMB 8826 / WCFS1) (Lactobacillus plantarum) protein is Tyrosine--tRNA ligase.